A 593-amino-acid polypeptide reads, in one-letter code: Glutamate decarboxylase 1 (593 aa).

Over residues 1–12 (MASSTPSPATSS) the composition is skewed to low complexity. The interval 1–22 (MASSTPSPATSSNAGADPNTTN) is disordered. At Ser77 the chain carries Phosphoserine. 189–191 (QLS) provides a ligand contact to 4-aminobutanoate. At Lys404 the chain carries N6-(pyridoxal phosphate)lysine. Arg566 lines the 4-aminobutanoate pocket.

It belongs to the group II decarboxylase family. Homodimer. It depends on pyridoxal 5'-phosphate as a cofactor.

The enzyme catalyses L-glutamate + H(+) = 4-aminobutanoate + CO2. In terms of biological role, catalyzes the synthesis of the inhibitory neurotransmitter gamma-aminobutyric acid (GABA) with pyridoxal 5'-phosphate as cofactor. This chain is Glutamate decarboxylase 1 (Gad1), found in Mus musculus (Mouse).